The chain runs to 113 residues: U11-theraphotoxin-Hhn1a (113 aa).

A signal peptide spans 1 to 21 (MNTVRVTFLLVFVLAVSLGQA). The propeptide occupies 22–74 (DKDENRMEMQEKTEQGKSYLDFAENLLLQKLEELEAKLLEEDSEESRNSRQRR). The segment at 61–83 (EEDSEESRNSRQRRCIGEGVPCD) is disordered. Intrachain disulfides connect Cys-75–Cys-90, Cys-82–Cys-95, and Cys-89–Cys-110.

It belongs to the neurotoxin 14 (magi-1) family. 01 (HNTX-16) subfamily. Expressed by the venom gland.

The protein resides in the secreted. Functionally, probable ion channel inhibitor. This is U11-theraphotoxin-Hhn1a from Cyriopagopus hainanus (Chinese bird spider).